The chain runs to 547 residues: Glucocorticoid-induced transcript 1 protein (547 aa).

A compositionally biased stretch (low complexity) spans 1–13; it reads MSTASSSSSSSSS. Disordered regions lie at residues 1–55 and 72–285; these read MSTA…APAA and LLRG…LSNI. Ser20 bears the Phosphoserine mark. Residues 26-38 show a composition bias toward low complexity; sequence SAAGSPPAVAAAG. The span at 39-50 shows a compositional bias: gly residues; sequence SGNGAGGGGGVG. Residues Ser79, Ser105, Ser107, and Ser108 each carry the phosphoserine modification. Positions 86–105 are enriched in low complexity; the sequence is AAAAASLGSLPGPGAARGPS. At Thr110 the chain carries Phosphothreonine. Residues 130–145 show a composition bias toward basic and acidic residues; sequence RSPESHRRSSSPERRS. Residues 162–177 are compositionally biased toward low complexity; that stretch reads RTSSTIRRTSSLDTIT. 2 positions are modified to phosphoserine: Ser171 and Ser172. A phosphothreonine mark is found at Thr175 and Thr177. Residues 187–201 show a composition bias toward basic and acidic residues; sequence RDPHVHYPSCMKDKA. Ser223 carries the post-translational modification Phosphoserine. A coiled-coil region spans residues 225–254; that stretch reads GSADQLKEQIAKLRQQLQRSKQSSRHSKEK. Residues 236 to 245 show a composition bias toward low complexity; the sequence is KLRQQLQRSK. Position 258 is a phosphoserine (Ser258). Polar residues predominate over residues 265-276; sequence ITISHTQATGSR. Thr266 carries the post-translational modification Phosphothreonine. Ser303 bears the Phosphoserine mark. A compositionally biased stretch (basic and acidic residues) spans 319–331; it reads EVSKPLDIPDGRR. Residues 319–417 are disordered; the sequence is EVSKPLDIPD…KPNNSYMFKR (99 aa). Residues 339–356 show a composition bias toward polar residues; sequence RSSSTRSIDTQTPSVQER. Residue Thr343 is modified to Phosphothreonine. Ser345 is modified (phosphoserine). The residue at position 350 (Thr350) is a Phosphothreonine. The span at 357–369 shows a compositional bias: low complexity; it reads SSSCSSHSPCVSP. Residues Ser394, Ser398, Ser406, Ser412, and Ser480 each carry the phosphoserine modification. Over residues 505-520 the composition is skewed to polar residues; that stretch reads SLSDDTSTAGSMEASV. The segment at 505 to 530 is disordered; that stretch reads SLSDDTSTAGSMEASVQQPSQQQQLL. Low complexity predominate over residues 521–530; that stretch reads QQPSQQQQLL.

As to expression, predominantly expressed in lung, spleen, thymus and testis and, at lower levels, in brain, bone marrow, peripheral leukocytes, skin and trachea.

The chain is Glucocorticoid-induced transcript 1 protein (GLCCI1) from Homo sapiens (Human).